Consider the following 526-residue polypeptide: MSLRPSERVEVRRNRYKVAVDAEEGRRRREDNMVEIRKSRREESLLKKRREGLQAQAPVPASAATGVDKKLESLPAMIGGVYSDDNNLQLEATTQFRKLLSIERSPPIEEVIQSGVVPRFVQFLTREDFPQLQFEAAWALTNIASGTSENTKVVIDHGAVPIFVKLLGSSSDDVREQAVWALGNVAGDSPKCRDLVLANGALLPLLAQLNEHTKLSMLRNATWTLSNFCRGKPQPSFEQTRPALPALARLIHSNDEEVLTDACWALSYLSDGTNDKIQAVIEAGVCPRLVELLLHPSPSVLIPALRTVGNIVTGDDAQTQCIIDHQALPCLLSLLTQNLKKSIKKEACWTISNITAGNKDQIQAVINAGIIGPLVNLLQTAEFDIKKEAAWAISNATSGGSHDQIKYLVSEGCIKPLCDLLICPDIRIVTVCLEGLENILKVGETDKTLAAGDVNVFSQMIDEAEGLEKIENLQSHDNNEIYEKAVKILEAYWMDEEDDTMGATTVAAPQGATFDFGQGGGAAQFK.

An IBB domain is found at 1–58; the sequence is MSLRPSERVEVRRNRYKVAVDAEEGRRRREDNMVEIRKSRREESLLKKRREGLQAQAP. ARM repeat units lie at residues 105 to 145, 148 to 187, 190 to 230, 232 to 271, 274 to 313, 316 to 356, 359 to 398, and 402 to 441; these read SPPI…NIAS, SENTKVVIDHGAVPIFVKLLGSSSDDVREQAVWALGNVAG, PKCR…NFCR, KPQPSFEQTRPALPALARLIHSNDEEVLTDACWALSYLSD, NDKIQAVIEAGVCPRLVELLLHPSPSVLIPALRTVGNIVT, DAQT…NITA, KDQIQAVINAGIIGPLVNLLQTAEFDIKKEAAWAISNATS, and HDQIKYLVSEGCIKPLCDLLICPDIRIVTVCLEGLENILK.

It belongs to the importin alpha family. Forms a complex with importin subunit beta-1. The whole complex, most stable and composed of importin alpha, importin beta and NLS substrate, is referred to as PTAC or pore targeting complex. Interacts with mungbean yellow mosaic virus capsid protein. In terms of tissue distribution, highly expressed in callus, followed by root and etiolated leaf. Low expression in green leaf.

It localises to the cytoplasm. The protein localises to the perinuclear region. In terms of biological role, functions in nuclear protein import. Binds specifically and directly to substrates containing either a simple or bipartite NLS motif. Promotes docking of import substrates to the nuclear envelope. The polypeptide is Importin subunit alpha-1a (Oryza sativa subsp. japonica (Rice)).